The sequence spans 704 residues: Zinc finger protein MSN2 (704 aa).

The disordered stretch occupies residues 84–246 (PSTTDNSLHL…SISNSNSNST (163 aa)). Over residues 91 to 112 (LHLKADSNKNRDARTIENDSEI) the composition is skewed to basic and acidic residues. Residues 113–133 (KSTNNASGSGANQYTTLTSPY) are compositionally biased toward polar residues. The segment covering 141–166 (NMNNPLQSPSPSSVPQNPTINPPINT) has biased composition (low complexity). Polar residues-rich tracts occupy residues 167–193 (ASNE…QQHT) and 204–220 (NGAN…NNLN). The span at 228–246 (NSDTNSYSNSISNSNSNST) shows a compositional bias: low complexity. The 9aaTAD signature appears at 261 to 269 (SMLDDYVSS). Phosphoserine is present on residues S288 and S304. A disordered region spans residues 418-437 (NRVQHKQLTSSHNNSSTNMK). The segment covering 426–437 (TSSHNNSSTNMK) has biased composition (polar residues). Residues S451 and S582 each carry the phosphoserine modification. The tract at residues 592 to 634 (LTNQQNNISSSSVNSTGNGAGVTKERRPSYRRKSMTPSRRSSV) is disordered. Positions 593-608 (TNQQNNISSSSVNSTG) are enriched in low complexity. A Phosphoserine modification is found at S633. 2 C2H2-type zinc fingers span residues 647–665 (FHCH…LKRH) and 676–698 (FACH…IKTH).

As to quaternary structure, interacts with WHI2.

It localises to the cytoplasm. The protein localises to the nucleus. Functionally, positive transcriptional factor that acts as a component of the stress responsive system. Recognizes and binds to the stress response element (STRE) which is involved in the response to various forms of stress (heat, oxidative, osmotic, etc.). Involved in the regulation of the CTT1, DDR2, HSP12 genes. May be regulated via WHI2-PSR1 complex phosphatase activity. The polypeptide is Zinc finger protein MSN2 (MSN2) (Saccharomyces cerevisiae (strain ATCC 204508 / S288c) (Baker's yeast)).